The sequence spans 144 residues: Cell division protein SepF (144 aa).

This sequence belongs to the SepF family. Homodimer. Interacts with FtsZ.

The protein resides in the cytoplasm. In terms of biological role, cell division protein that is part of the divisome complex and is recruited early to the Z-ring. Probably stimulates Z-ring formation, perhaps through the cross-linking of FtsZ protofilaments. Its function overlaps with FtsA. The protein is Cell division protein SepF of Geobacillus sp. (strain WCH70).